Reading from the N-terminus, the 89-residue chain is Small ribosomal subunit protein uS15 (89 aa).

It belongs to the universal ribosomal protein uS15 family. As to quaternary structure, part of the 30S ribosomal subunit. Forms a bridge to the 50S subunit in the 70S ribosome, contacting the 23S rRNA.

Functionally, one of the primary rRNA binding proteins, it binds directly to 16S rRNA where it helps nucleate assembly of the platform of the 30S subunit by binding and bridging several RNA helices of the 16S rRNA. Its function is as follows. Forms an intersubunit bridge (bridge B4) with the 23S rRNA of the 50S subunit in the ribosome. This chain is Small ribosomal subunit protein uS15, found in Acidiphilium cryptum (strain JF-5).